The primary structure comprises 510 residues: Maturase K (510 aa).

The protein belongs to the intron maturase 2 family. MatK subfamily.

The protein localises to the plastid. Functionally, usually encoded in the trnK tRNA gene intron. Probably assists in splicing its own and other chloroplast group II introns. In Bartsia alpina (Velvet bells), this protein is Maturase K.